A 580-amino-acid chain; its full sequence is Arginine--tRNA ligase (580 aa).

The 'HIGH' region signature appears at 131-141 (ANPTGPMHVGH).

It belongs to the class-I aminoacyl-tRNA synthetase family. Monomer.

It localises to the cytoplasm. It carries out the reaction tRNA(Arg) + L-arginine + ATP = L-arginyl-tRNA(Arg) + AMP + diphosphate. The polypeptide is Arginine--tRNA ligase (Cereibacter sphaeroides (strain KD131 / KCTC 12085) (Rhodobacter sphaeroides)).